Reading from the N-terminus, the 452-residue chain is Membrane-bound lytic murein transglycosylase D (452 aa).

The N-terminal stretch at 1–15 (MKAKAILLASVLLVG) is a signal peptide. A lipid anchor (N-palmitoyl cysteine) is attached at Cys16. The S-diacylglycerol cysteine moiety is linked to residue Cys16. A slt-type domain region spans residues 113-198 (NMPMELVLLP…LLTVAAYNSG (86 aa)). Glu125 is an active-site residue. LysM domains follow at residues 341–384 (RVYT…SLTI) and 400–448 (ITYR…KNNN).

Belongs to the transglycosylase Slt family.

Its subcellular location is the cell membrane. It carries out the reaction Exolytic cleavage of the (1-&gt;4)-beta-glycosidic linkage between N-acetylmuramic acid (MurNAc) and N-acetylglucosamine (GlcNAc) residues in peptidoglycan, from either the reducing or the non-reducing ends of the peptidoglycan chains, with concomitant formation of a 1,6-anhydrobond in the MurNAc residue.. Its function is as follows. Murein-degrading enzyme. May play a role in recycling of muropeptides during cell elongation and/or cell division. The chain is Membrane-bound lytic murein transglycosylase D (mltD) from Escherichia coli O6:H1 (strain CFT073 / ATCC 700928 / UPEC).